The sequence spans 244 residues: Probable septum site-determining protein MinC (244 aa).

Belongs to the MinC family. In terms of assembly, interacts with MinD and FtsZ.

Its function is as follows. Cell division inhibitor that blocks the formation of polar Z ring septums. Rapidly oscillates between the poles of the cell to destabilize FtsZ filaments that have formed before they mature into polar Z rings. Prevents FtsZ polymerization. This Dichelobacter nodosus (strain VCS1703A) protein is Probable septum site-determining protein MinC.